The following is a 121-amino-acid chain: Phospholipase A2 homolog EPL_00195 (121 aa).

Disulfide bonds link Cys25-Cys114, Cys27-Cys43, Cys42-Cys94, Cys48-Cys121, Cys49-Cys87, Cys56-Cys80, and Cys74-Cys85. Residues 104–116 (KKYRIYPNFLCRG) form an important for membrane-damaging activities in eukaryotes and bacteria; heparin-binding region.

The protein belongs to the phospholipase A2 family. Group II subfamily. S49 sub-subfamily. In terms of assembly, monomer. Expressed by the venom gland.

The protein resides in the secreted. Functionally, snake venom phospholipase A2 homolog that lacks enzymatic activity. Shows high myotoxin activities and displays edema-inducing activities. Has cytotoxic activities against HUVEC cells (LC(50)=2.5 uL) and human lung adenocarcinoma A549 cells (LC(50)=2.9 uL). This is Phospholipase A2 homolog EPL_00195 from Echis pyramidum leakeyi (Leakey's carpet viper).